Reading from the N-terminus, the 539-residue chain is CTP synthase (539 aa).

The interval 1 to 268 (MSFKCIFLTG…STFITEKLGL (268 aa)) is amidoligase domain. CTP is bound at residue Ser-14. A UTP-binding site is contributed by Ser-14. 15-20 (SLGKGL) is a binding site for ATP. Tyr-55 serves as a coordination point for L-glutamine. Asp-72 serves as a coordination point for ATP. Mg(2+) contacts are provided by Asp-72 and Glu-142. CTP is bound by residues 149-151 (DIE), 188-193 (KTKPTQ), and Lys-224. UTP-binding positions include 188 to 193 (KTKPTQ) and Lys-224. One can recognise a Glutamine amidotransferase type-1 domain in the interval 294 to 533 (RIGLVGKYVQ…IQAAILYSRN (240 aa)). Gly-353 contacts L-glutamine. The Nucleophile; for glutamine hydrolysis role is filled by Cys-380. L-glutamine-binding positions include 381–384 (LGMQ), Glu-404, and Arg-461. Active-site residues include His-506 and Glu-508.

The protein belongs to the CTP synthase family. In terms of assembly, homotetramer.

It catalyses the reaction UTP + L-glutamine + ATP + H2O = CTP + L-glutamate + ADP + phosphate + 2 H(+). The catalysed reaction is L-glutamine + H2O = L-glutamate + NH4(+). The enzyme catalyses UTP + NH4(+) + ATP = CTP + ADP + phosphate + 2 H(+). It functions in the pathway pyrimidine metabolism; CTP biosynthesis via de novo pathway; CTP from UDP: step 2/2. Its activity is regulated as follows. Allosterically activated by GTP, when glutamine is the substrate; GTP has no effect on the reaction when ammonia is the substrate. The allosteric effector GTP functions by stabilizing the protein conformation that binds the tetrahedral intermediate(s) formed during glutamine hydrolysis. Inhibited by the product CTP, via allosteric rather than competitive inhibition. Functionally, catalyzes the ATP-dependent amination of UTP to CTP with either L-glutamine or ammonia as the source of nitrogen. Regulates intracellular CTP levels through interactions with the four ribonucleotide triphosphates. The polypeptide is CTP synthase (Chlamydia felis (strain Fe/C-56) (Chlamydophila felis)).